A 265-amino-acid polypeptide reads, in one-letter code: Probable ribose-5-phosphate isomerase 2 (265 aa).

At A2 the chain carries N-acetylalanine. S96 carries the phosphoserine modification.

It belongs to the ribose 5-phosphate isomerase family.

It is found in the cytoplasm. It catalyses the reaction aldehydo-D-ribose 5-phosphate = D-ribulose 5-phosphate. It participates in carbohydrate degradation; pentose phosphate pathway; D-ribose 5-phosphate from D-ribulose 5-phosphate (non-oxidative stage): step 1/1. In terms of biological role, catalyzes the reversible conversion of ribose-5-phosphate to ribulose 5-phosphate. The protein is Probable ribose-5-phosphate isomerase 2 (RPI2) of Arabidopsis thaliana (Mouse-ear cress).